Here is a 276-residue protein sequence, read N- to C-terminus: F420-dependent methylenetetrahydromethanopterin dehydrogenase (276 aa).

Residues 253–276 (TVLRTPHGKEGKTLSKKDLLAKPE) are disordered. The span at 259–276 (HGKEGKTLSKKDLLAKPE) shows a compositional bias: basic and acidic residues.

The protein belongs to the MTD family. In terms of assembly, found to be tightly associated with methyl-coenzyme M methylreductase.

The catalysed reaction is 5,10-methylenetetrahydromethanopterin + oxidized coenzyme F420-(gamma-L-Glu)(n) + 2 H(+) = 5,10-methenyl-5,6,7,8-tetrahydromethanopterin + reduced coenzyme F420-(gamma-L-Glu)(n). It functions in the pathway one-carbon metabolism; methanogenesis from CO(2); 5,10-methylene-5,6,7,8-tetrahydromethanopterin from 5,10-methenyl-5,6,7,8-tetrahydromethanopterin (coenzyme F420 route): step 1/1. Activity requires salt; 100 mM sodium or potassium salts of chloride, phosphate or sulfate are equally effective. Not inactivated by O(2). Inhibited by hydrogen-producing 5,10-methenyltetrahydromethanopterin hydrogenase which has a higher affinity for their shared substrate. Enzyme is O(2)-stable and strictly dependent on coenzyme F420. Functionally, catalyzes the reversible reduction of methenyl-H(4)MPT(+) to methylene-H(4)MPT. This chain is F420-dependent methylenetetrahydromethanopterin dehydrogenase, found in Methanothermobacter marburgensis (strain ATCC BAA-927 / DSM 2133 / JCM 14651 / NBRC 100331 / OCM 82 / Marburg) (Methanobacterium thermoautotrophicum).